Consider the following 359-residue polypeptide: Queuine tRNA-ribosyltransferase (359 aa).

Asp-92 acts as the Proton acceptor in catalysis. Residues 92-96, Asp-146, Gln-189, and Gly-216 each bind substrate; that span reads DSGGF. Residues 245 to 251 form an RNA binding region; sequence GVGKPAD. Asp-264 (nucleophile) is an active-site residue. Residues 269-273 are RNA binding; important for wobble base 34 recognition; sequence TRSGR. Residues Cys-302, Cys-304, Cys-307, and His-333 each coordinate Zn(2+).

This sequence belongs to the queuine tRNA-ribosyltransferase family. Homodimer. Within each dimer, one monomer is responsible for RNA recognition and catalysis, while the other monomer binds to the replacement base PreQ1. Zn(2+) is required as a cofactor.

The enzyme catalyses 7-aminomethyl-7-carbaguanine + guanosine(34) in tRNA = 7-aminomethyl-7-carbaguanosine(34) in tRNA + guanine. Its pathway is tRNA modification; tRNA-queuosine biosynthesis. In terms of biological role, catalyzes the base-exchange of a guanine (G) residue with the queuine precursor 7-aminomethyl-7-deazaguanine (PreQ1) at position 34 (anticodon wobble position) in tRNAs with GU(N) anticodons (tRNA-Asp, -Asn, -His and -Tyr). Catalysis occurs through a double-displacement mechanism. The nucleophile active site attacks the C1' of nucleotide 34 to detach the guanine base from the RNA, forming a covalent enzyme-RNA intermediate. The proton acceptor active site deprotonates the incoming PreQ1, allowing a nucleophilic attack on the C1' of the ribose to form the product. After dissociation, two additional enzymatic reactions on the tRNA convert PreQ1 to queuine (Q), resulting in the hypermodified nucleoside queuosine (7-(((4,5-cis-dihydroxy-2-cyclopenten-1-yl)amino)methyl)-7-deazaguanosine). This Rickettsia bellii (strain RML369-C) protein is Queuine tRNA-ribosyltransferase.